The sequence spans 963 residues: Ubiquitin carboxyl-terminal hydrolase 11 (963 aa).

The tract at residues 64–93 (VTEDREPQHEELPGLDSQWRQIENGESGRE) is disordered. Over residues 65 to 75 (TEDREPQHEEL) the composition is skewed to basic and acidic residues. The DUSP domain maps to 76–184 (PGLDSQWRQI…GQPPIERKVI (109 aa)). The residue at position 245 (K245) is an N6-acetyllysine. The USP domain occupies 309-930 (CGLTNLGNTC…AAYVLFYQRQ (622 aa)). C318 (nucleophile) is an active-site residue. Disordered stretches follow at residues 644–691 (TKPN…SGVT) and 716–735 (LFTLQTVNSNGTSDRTTSPE). S648 carries the post-translational modification Phosphoserine. Residues 649–665 (DDEDDGDEKEDDEEDKD) show a composition bias toward acidic residues. Over residues 717–731 (FTLQTVNSNGTSDRT) the composition is skewed to polar residues. Phosphoserine is present on S733. The active-site Proton acceptor is H888. The span at 938–957 (SPAGSSGAPASPACSSPPSS) shows a compositional bias: low complexity. A disordered region spans residues 938-963 (SPAGSSGAPASPACSSPPSSEFMDVN). Residue S948 is modified to Phosphoserine.

The protein belongs to the peptidase C19 family. As to quaternary structure, monomer. Associated component of the Polycomb group (PcG) multiprotein PRC1-like complex. Interacts with RANBP9/RANBPM. Interacts with BRCA2. Interacts with CHUK/IKKA. Interacts with NFKBIA. Interacts with SPRY3, RAE1, MYCBP2/PAM, and KCTD6. (Microbial infection) Interacts with papilloma virus protein 16E7.

Its subcellular location is the nucleus. It localises to the cytoplasm. It is found in the chromosome. It carries out the reaction Thiol-dependent hydrolysis of ester, thioester, amide, peptide and isopeptide bonds formed by the C-terminal Gly of ubiquitin (a 76-residue protein attached to proteins as an intracellular targeting signal).. Protease that can remove conjugated ubiquitin from target proteins and polyubiquitin chains. Inhibits the degradation of target proteins by the proteasome. Cleaves preferentially 'Lys-6' and 'Lys-63'-linked ubiquitin chains. Has lower activity with 'Lys-11' and 'Lys-33'-linked ubiquitin chains, and extremely low activity with 'Lys-27', 'Lys-29' and 'Lys-48'-linked ubiquitin chains (in vitro). Plays a role in the regulation of pathways leading to NF-kappa-B activation. Plays a role in the regulation of DNA repair after double-stranded DNA breaks. Acts as a chromatin regulator via its association with the Polycomb group (PcG) multiprotein PRC1-like complex; may act by deubiquitinating components of the PRC1-like complex. Promotes cell proliferation by deubiquitinating phosphorylated E2F1. The protein is Ubiquitin carboxyl-terminal hydrolase 11 (USP11) of Homo sapiens (Human).